Consider the following 32-residue polypeptide: Photosystem II reaction center protein T (32 aa).

The chain crosses the membrane as a helical span at residues S3 to F23.

The protein belongs to the PsbT family. As to quaternary structure, PSII is composed of 1 copy each of membrane proteins PsbA, PsbB, PsbC, PsbD, PsbE, PsbF, PsbH, PsbI, PsbJ, PsbK, PsbL, PsbM, PsbT, PsbX, PsbY, PsbZ, Psb30/Ycf12, peripheral proteins PsbO, CyanoQ (PsbQ), PsbU, PsbV and a large number of cofactors. It forms dimeric complexes.

The protein localises to the cellular thylakoid membrane. In terms of biological role, found at the monomer-monomer interface of the photosystem II (PS II) dimer, plays a role in assembly and dimerization of PSII. PSII is a light-driven water plastoquinone oxidoreductase, using light energy to abstract electrons from H(2)O, generating a proton gradient subsequently used for ATP formation. The sequence is that of Photosystem II reaction center protein T from Cyanothece sp. (strain PCC 7425 / ATCC 29141).